The primary structure comprises 93 residues: Large ribosomal subunit protein bL31B (93 aa).

This sequence belongs to the bacterial ribosomal protein bL31 family. Type B subfamily. Part of the 50S ribosomal subunit.

This is Large ribosomal subunit protein bL31B from Pseudomonas syringae pv. syringae (strain B728a).